The primary structure comprises 171 residues: NADH-quinone oxidoreductase subunit I 1 (171 aa).

4Fe-4S ferredoxin-type domains are found at residues 39–71 and 81–110; these read IVLT…LSKA and EHFR…LTPD. Positions 51, 54, 57, 61, 90, 93, 96, and 100 each coordinate [4Fe-4S] cluster.

Belongs to the complex I 23 kDa subunit family. NDH-1 is composed of 14 different subunits. Subunits NuoA, H, J, K, L, M, N constitute the membrane sector of the complex. [4Fe-4S] cluster serves as cofactor.

The protein resides in the cell inner membrane. The catalysed reaction is a quinone + NADH + 5 H(+)(in) = a quinol + NAD(+) + 4 H(+)(out). In terms of biological role, NDH-1 shuttles electrons from NADH, via FMN and iron-sulfur (Fe-S) centers, to quinones in the respiratory chain. The immediate electron acceptor for the enzyme in this species is believed to be ubiquinone. Couples the redox reaction to proton translocation (for every two electrons transferred, four hydrogen ions are translocated across the cytoplasmic membrane), and thus conserves the redox energy in a proton gradient. The chain is NADH-quinone oxidoreductase subunit I 1 from Rhodopseudomonas palustris (strain HaA2).